We begin with the raw amino-acid sequence, 144 residues long: Large ribosomal subunit protein uL16 (144 aa).

It belongs to the universal ribosomal protein uL16 family. Part of the 50S ribosomal subunit.

Its function is as follows. Binds 23S rRNA and is also seen to make contacts with the A and possibly P site tRNAs. This chain is Large ribosomal subunit protein uL16, found in Heliobacterium modesticaldum (strain ATCC 51547 / Ice1).